The sequence spans 78 residues: MAFRENVLEILEEITETDEVVQNTNIKLFDEGLLDSMATVQLLIEIEERLDITVPVSEFDRDEWATPEMIITQLEALK.

The Carrier domain occupies Met-1–Lys-78. Residue Ser-36 is modified to O-(pantetheine 4'-phosphoryl)serine.

The protein belongs to the DltC family. In terms of processing, 4'-phosphopantetheine is transferred from CoA to a specific serine of apo-DCP.

Its subcellular location is the cytoplasm. Its pathway is cell wall biogenesis; lipoteichoic acid biosynthesis. In terms of biological role, carrier protein involved in the D-alanylation of lipoteichoic acid (LTA). The loading of thioester-linked D-alanine onto DltC is catalyzed by D-alanine--D-alanyl carrier protein ligase DltA. The DltC-carried D-alanyl group is further transferred to cell membrane phosphatidylglycerol (PG) by forming an ester bond, probably catalyzed by DltD. D-alanylation of LTA plays an important role in modulating the properties of the cell wall in Gram-positive bacteria, influencing the net charge of the cell wall. This chain is D-alanyl carrier protein, found in Listeria monocytogenes serotype 4a (strain HCC23).